Reading from the N-terminus, the 333-residue chain is Neuropeptides B/W receptor type 2 (333 aa).

The Extracellular segment spans residues 1–45; that stretch reads MQAAGHPEPLDSRGSFSLPTMGANVSQDNGTGHNATFSEPLPFLY. N-linked (GlcNAc...) asparagine glycosylation is found at N24, N29, and N34. Residues 46–69 traverse the membrane as a helical segment; the sequence is VLLPAVYSGICAVGLTGNTAVILV. The Cytoplasmic portion of the chain corresponds to 70 to 80; the sequence is ILRAPKMKTVT. The helical transmembrane segment at 81 to 105 threads the bilayer; sequence NVFILNLAVADGLFTLVLPVNIAEH. Residues 106-120 are Extracellular-facing; that stretch reads LLQYWPFGELLCKLV. C117 and C197 are joined by a disulfide. The helical transmembrane segment at 121–140 threads the bilayer; it reads LAVDHYNIFSSIYFLAVMSV. At 141–165 the chain is on the cytoplasmic side; it reads DRYLVVLATVRSRHMPWRTYRGAKV. Residues 166–185 form a helical membrane-spanning segment; sequence ASLCVWLGVTVLVLPFFSFA. The Extracellular portion of the chain corresponds to 186-211; that stretch reads GVYSNELQVPSCGLSFPWPEQVWFKA. The chain crosses the membrane as a helical span at residues 212–233; the sequence is SRVYTLVLGFVLPVCTICVLYT. Topologically, residues 234–257 are cytoplasmic; sequence DLLRRLRAVRLRSGAKALGKARRK. Residues 258-282 form a helical membrane-spanning segment; it reads VTVLVLVVLAVCLLCWTPFHLASVV. At 283-292 the chain is on the extracellular side; sequence ALTTDLPQTP. The chain crosses the membrane as a helical span at residues 293–307; sequence LVISMSYVITSLSYA. The Cytoplasmic portion of the chain corresponds to 308–333; that stretch reads NSCLNPFLYAFLDDNFRKNFRSILRC.

Belongs to the G-protein coupled receptor 1 family. In terms of tissue distribution, detected at high levels in caudate nucleus, hippocampus and amygdala; at moderate levels in the adult brain, thalamus, parietal cortex, pituitary gland, adrenal gland and lymph nodes.

Its subcellular location is the cell membrane. Interacts specifically with a number of opioid ligands. Receptor for neuropeptides B and W, which may be involved in neuroendocrine system regulation, food intake and the organization of other signals. The protein is Neuropeptides B/W receptor type 2 (NPBWR2) of Homo sapiens (Human).